The primary structure comprises 163 residues: Protein FAM167B (163 aa).

Positions 73-132 (FDSMDSALEWLRRELREMQAQDRQLAGQLLRLRAQLHRLKMDQACHLHQELLDEAELELE) form a coiled coil.

Belongs to the FAM167 (SEC) family.

This chain is Protein FAM167B (FAM167B), found in Homo sapiens (Human).